Consider the following 377-residue polypeptide: MRYCRELMRRPSITPEDAGCQQWLGERLVAMGFDVSHYQDKGVSNLLASFDERPAQLALAGHTDVVPPGDLSRWQTPPFAATLVDGMLIGRGAVDMKSGLAVMLAAVEDHIACYGLPKANWQFIVTSDEEGEAEHGTRTLVERLKAQSRLPKYCVVAEPTADKQAGDVIKIGRRGAISARLTLKGKQGHVAYPKNAVNALHMAARVMQALEALIWDEGSDDFPGTSLQVTHVDSGAFTDNIVPGSCEICFNIRYSYRYSEAGIMARIQACLDGLSLGEDAISLRWERGCQPYHTQENDEQSLIAQVEAAIFEVTASFPRLSTSGGTSDGRFLSSPQTQVIELGLPNRTIHQVNERVELAQIVRLYRIYRALLTRFHD.

His-62 contacts Zn(2+). Asp-64 is an active-site residue. Asp-95 contacts Zn(2+). Residue Glu-129 is the Proton acceptor of the active site. Residues Glu-130, Glu-158, and His-350 each coordinate Zn(2+).

It belongs to the peptidase M20A family. DapE subfamily. In terms of assembly, homodimer. Zn(2+) is required as a cofactor. The cofactor is Co(2+).

It carries out the reaction N-succinyl-(2S,6S)-2,6-diaminopimelate + H2O = (2S,6S)-2,6-diaminopimelate + succinate. The protein operates within amino-acid biosynthesis; L-lysine biosynthesis via DAP pathway; LL-2,6-diaminopimelate from (S)-tetrahydrodipicolinate (succinylase route): step 3/3. Its function is as follows. Catalyzes the hydrolysis of N-succinyl-L,L-diaminopimelic acid (SDAP), forming succinate and LL-2,6-diaminopimelate (DAP), an intermediate involved in the bacterial biosynthesis of lysine and meso-diaminopimelic acid, an essential component of bacterial cell walls. The sequence is that of Succinyl-diaminopimelate desuccinylase 2 from Shewanella loihica (strain ATCC BAA-1088 / PV-4).